The following is a 294-amino-acid chain: Ribosomal protein L11 methyltransferase (294 aa).

Positions 145, 166, 188, and 230 each coordinate S-adenosyl-L-methionine.

It belongs to the methyltransferase superfamily. PrmA family.

Its subcellular location is the cytoplasm. The catalysed reaction is L-lysyl-[protein] + 3 S-adenosyl-L-methionine = N(6),N(6),N(6)-trimethyl-L-lysyl-[protein] + 3 S-adenosyl-L-homocysteine + 3 H(+). In terms of biological role, methylates ribosomal protein L11. The sequence is that of Ribosomal protein L11 methyltransferase from Glaesserella parasuis serovar 5 (strain SH0165) (Haemophilus parasuis).